A 502-amino-acid chain; its full sequence is uncharacterized protein (502 aa).

The chain crosses the membrane as a helical span at residues 1 to 21 (MKIFLVFLSVFFFNGCFGLVY). PLD phosphodiesterase domains follow at residues 162 to 189 (IKKRMHNKLFIVDNFAVIIGGRNIGDNY) and 396 to 423 (TKHSLHGKTIVFDDNLTLLGSFNIDPRS).

Belongs to the phospholipase D family. Cardiolipin synthase subfamily.

The protein localises to the cell membrane. This is an uncharacterized protein from Helicobacter pylori (strain ATCC 700392 / 26695) (Campylobacter pylori).